The primary structure comprises 227 residues: 7-cyano-7-deazaguanine synthase (227 aa).

Residue 7–17 participates in ATP binding; it reads LSGGLDSSTIL. Zn(2+) is bound by residues Cys191, Cys199, Cys202, and Cys205.

This sequence belongs to the QueC family. Requires Zn(2+) as cofactor.

The enzyme catalyses 7-carboxy-7-deazaguanine + NH4(+) + ATP = 7-cyano-7-deazaguanine + ADP + phosphate + H2O + H(+). It participates in purine metabolism; 7-cyano-7-deazaguanine biosynthesis. Functionally, catalyzes the ATP-dependent conversion of 7-carboxy-7-deazaguanine (CDG) to 7-cyano-7-deazaguanine (preQ(0)). This is 7-cyano-7-deazaguanine synthase from Trichormus variabilis (strain ATCC 29413 / PCC 7937) (Anabaena variabilis).